A 124-amino-acid chain; its full sequence is Large ribosomal subunit protein uL18 (124 aa).

This sequence belongs to the universal ribosomal protein uL18 family. Part of the 50S ribosomal subunit; part of the 5S rRNA/L5/L18/L25 subcomplex. Contacts the 5S and 23S rRNAs.

In terms of biological role, this is one of the proteins that bind and probably mediate the attachment of the 5S RNA into the large ribosomal subunit, where it forms part of the central protuberance. This is Large ribosomal subunit protein uL18 from Frankia casuarinae (strain DSM 45818 / CECT 9043 / HFP020203 / CcI3).